A 347-amino-acid polypeptide reads, in one-letter code: Quinolinate synthase (347 aa).

Iminosuccinate contacts are provided by His-47 and Ser-68. Cys-113 serves as a coordination point for [4Fe-4S] cluster. Iminosuccinate is bound by residues 139-141 (YAN) and Ser-156. Position 200 (Cys-200) interacts with [4Fe-4S] cluster. Iminosuccinate-binding positions include 226-228 (HPE) and Thr-243. Cys-297 serves as a coordination point for [4Fe-4S] cluster.

Belongs to the quinolinate synthase family. Type 1 subfamily. [4Fe-4S] cluster serves as cofactor.

It is found in the cytoplasm. It catalyses the reaction iminosuccinate + dihydroxyacetone phosphate = quinolinate + phosphate + 2 H2O + H(+). It functions in the pathway cofactor biosynthesis; NAD(+) biosynthesis; quinolinate from iminoaspartate: step 1/1. Functionally, catalyzes the condensation of iminoaspartate with dihydroxyacetone phosphate to form quinolinate. This chain is Quinolinate synthase, found in Shigella boydii serotype 4 (strain Sb227).